The sequence spans 485 residues: UDP-N-acetylmuramoyl-L-alanyl-D-glutamate--2,6-diaminopimelate ligase (485 aa).

S32 contributes to the UDP-N-acetyl-alpha-D-muramoyl-L-alanyl-D-glutamate binding site. 111 to 117 (GTNGKTT) contributes to the ATP binding site. Residues 153–154 (TT), S180, and R188 each bind UDP-N-acetyl-alpha-D-muramoyl-L-alanyl-D-glutamate. N6-carboxylysine is present on K220. Residues R382, 405–408 (DNPR), G455, and E459 each bind meso-2,6-diaminopimelate. The Meso-diaminopimelate recognition motif motif lies at 405 to 408 (DNPR).

The protein belongs to the MurCDEF family. MurE subfamily. Mg(2+) serves as cofactor. Carboxylation is probably crucial for Mg(2+) binding and, consequently, for the gamma-phosphate positioning of ATP.

It is found in the cytoplasm. The catalysed reaction is UDP-N-acetyl-alpha-D-muramoyl-L-alanyl-D-glutamate + meso-2,6-diaminopimelate + ATP = UDP-N-acetyl-alpha-D-muramoyl-L-alanyl-gamma-D-glutamyl-meso-2,6-diaminopimelate + ADP + phosphate + H(+). The protein operates within cell wall biogenesis; peptidoglycan biosynthesis. In terms of biological role, catalyzes the addition of meso-diaminopimelic acid to the nucleotide precursor UDP-N-acetylmuramoyl-L-alanyl-D-glutamate (UMAG) in the biosynthesis of bacterial cell-wall peptidoglycan. The protein is UDP-N-acetylmuramoyl-L-alanyl-D-glutamate--2,6-diaminopimelate ligase of Chlamydia felis (strain Fe/C-56) (Chlamydophila felis).